We begin with the raw amino-acid sequence, 940 residues long: Gamma-aminobutyric acid type B receptor subunit 2 (940 aa).

An N-terminal signal peptide occupies residues 1 to 40 (MASPPSSGQPRPPPPPPPPARLLLPLLLSLLLSLAPGAWG). Residues 41-482 (WARGAPRPPP…LRKISLPLYS (442 aa)) are Extracellular-facing. A glycan (N-linked (GlcNAc...) asparagine) is linked at asparagine 89. Disulfide bonds link cysteine 107–cysteine 134, cysteine 236–cysteine 265, and cysteine 264–cysteine 301. N-linked (GlcNAc...) asparagine glycosylation is found at asparagine 297, asparagine 388, asparagine 403, and asparagine 452. A helical membrane pass occupies residues 483 to 503 (ILSALTILGMIMASAFLFFNI). Topologically, residues 504 to 521 (KNRNQKLIKMSSPYMNNL) are cytoplasmic. The helical transmembrane segment at 522-542 (IILGGMLSYASIFLFGLDGSF) threads the bilayer. Residues 543–550 (VSEKTFET) lie on the Extracellular side of the membrane. Residues 551–571 (LCTVRTWILTVGYTTAFGAMF) form a helical membrane-spanning segment. The Cytoplasmic portion of the chain corresponds to 572–596 (AKTWRVHAIFKNVKMKKKIIKDQKL). A helical transmembrane segment spans residues 597–617 (LVIVGGMLLIDLCILICWQAV). Topologically, residues 618-653 (DPLRRTVERYSMEPDPAGRDISIRPLLEHCENTHMT) are extracellular. Residues 654 to 674 (IWLGIVYAYKGLLMLFGCFLA) traverse the membrane as a helical segment. The Cytoplasmic segment spans residues 675–690 (WETRNVSIPALNDSKY). A helical transmembrane segment spans residues 691 to 711 (IGMSVYNVGIMCIIGAAVSFL). Topologically, residues 712 to 719 (TRDQPNVQ) are extracellular. Residues 720-740 (FCIVALVIIFCSTITLCLVFV) traverse the membrane as a helical segment. Residues 741 to 940 (PKLITLRTNP…PSFRVMVSGL (200 aa)) lie on the Cytoplasmic side of the membrane. A disordered region spans residues 762-789 (TQNQKKEDSKTSTSVTSVNQASTSRLEG). The span at 772–786 (TSTSVTSVNQASTSR) shows a compositional bias: polar residues. Serine 775 and serine 778 each carry phosphoserine. The stretch at 781–818 (QASTSRLEGLQSENHRLRMKITELDKDLEEVTMQLQDT) forms a coiled coil. Threonine 818 is modified (phosphothreonine). 6 positions are modified to phosphoserine: serine 883, serine 892, serine 912, serine 915, serine 919, and serine 923.

Belongs to the G-protein coupled receptor 3 family. GABA-B receptor subfamily. As to quaternary structure, heterodimer of GABBR1 and GABBR2. Homodimers may form, but are inactive. Interacts (via C-terminus) with ATF4 (via leucine zipper domain).

The protein localises to the cell membrane. Its subcellular location is the postsynaptic cell membrane. Functionally, component of a heterodimeric G-protein coupled receptor for GABA, formed by GABBR1 and GABBR2. Within the heterodimeric GABA receptor, only GABBR1 seems to bind agonists, while GABBR2 mediates coupling to G proteins. Ligand binding causes a conformation change that triggers signaling via guanine nucleotide-binding proteins (G proteins) and modulates the activity of down-stream effectors, such as adenylate cyclase. Signaling inhibits adenylate cyclase, stimulates phospholipase A2, activates potassium channels, inactivates voltage-dependent calcium-channels and modulates inositol phospholipid hydrolysis. Plays a critical role in the fine-tuning of inhibitory synaptic transmission. Pre-synaptic GABA receptor inhibits neurotransmitter release by down-regulating high-voltage activated calcium channels, whereas postsynaptic GABA receptor decreases neuronal excitability by activating a prominent inwardly rectifying potassium (Kir) conductance that underlies the late inhibitory postsynaptic potentials. Not only implicated in synaptic inhibition but also in hippocampal long-term potentiation, slow wave sleep, muscle relaxation and antinociception. Interacts with KCTD8, KCTD12 and KCTD16; this interaction determines the pharmacology and kinetics of the receptor response, the KCTD proteins markedly accelerating the GABA-B response, although to different extents. In Mus musculus (Mouse), this protein is Gamma-aminobutyric acid type B receptor subunit 2 (Gabbr2).